The following is a 104-amino-acid chain: Phycoerythrin alpha-2 chain, chloroplastic (104 aa).

Residues 1-37 constitute a chloroplast transit peptide; that stretch reads MSAKIIAFSAVVATASAFAPTAGFVPRLRSGATSVNM. K41 is subject to 5-hydroxylysine. 15,16-dihydrobiliverdin-binding residues include C56 and R58. Residues 61-63 are 15,16-dihydrobiliverdin chromophore; that stretch reads KEY. K78 provides a ligand contact to 15,16-dihydrobiliverdin.

It belongs to the phycoerythrin family. In terms of assembly, heterotetramer of 2 different alpha chains and 2 identical beta chains. The subunit composition could comprise of any combination of 2 out of 4 different alpha units with an invariant beta unit. Contains one covalently linked 15,16-dihydrobiliverdin chromophore.

Its subcellular location is the plastid. It localises to the chloroplast thylakoid membrane. Functionally, light-harvesting photosynthetic tetrapyrrole chromophore-protein from the phycobiliprotein complex. This Rhodomonas sp. (strain CS 24) (Chroomonas sp. (strain CS24)) protein is Phycoerythrin alpha-2 chain, chloroplastic (cpeA2).